Here is a 233-residue protein sequence, read N- to C-terminus: Archaetidylserine synthase (233 aa).

The next 8 membrane-spanning stretches (helical) occupy residues 7 to 27 (ITSF…SGYL), 29 to 49 (ILLS…LAVL), 75 to 95 (SLSD…SAAV), 102 to 122 (ILVG…FNVL), 126 to 146 (GKNF…SFYL), 147 to 167 (TGFY…VLMI), 180 to 200 (ASTA…VEIL), and 206 to 226 (VAGP…AVPI).

Belongs to the CDP-alcohol phosphatidyltransferase class-I family.

The protein resides in the membrane. It carries out the reaction CDP-2,3-bis-O-(geranylgeranyl)-sn-glycerol + L-serine = archaetidylserine + CMP + H(+). The enzyme catalyses CDP-2,3-bis-O-(phytanyl)-sn-glycerol + L-serine = 2,3-bis-O-phytanyl-sn-glycero-3-phospho-L-serine + CMP + H(+). Its pathway is membrane lipid metabolism; glycerophospholipid metabolism. With respect to regulation, activated by Mn(2+) ions. In terms of biological role, involved in the lipid biosynthesis. Catalyzes the formation of unsaturated archaetidylserine from CDP-unsaturated archaeol and L-serine. Activity with ester-linked substrate analogs containing straight aliphatic chains (typical bacterial substrates) is two to three times higher than that with the corresponding ether-type substrate (typical archaeal substrates). Both enantiomers of CDP-unsaturated archaeols with ether-linked geranylgeranyl chains and CDP-saturated archaeol with ether-linked phytanyl chains are similarly active. The enzyme also accepts D-serine, although activity is only about third of that with L-serine. The sequence is that of Archaetidylserine synthase from Methanothermobacter thermautotrophicus (strain ATCC 29096 / DSM 1053 / JCM 10044 / NBRC 100330 / Delta H) (Methanobacterium thermoautotrophicum).